Here is a 257-residue protein sequence, read N- to C-terminus: Protein LigF (257 aa).

A GST N-terminal domain is found at 1-82 (MTLKLYSFGP…YLEDVFPESG (82 aa)). Positions 89-257 (DPFKRAEMRV…LLKRQNEKVA (169 aa)) constitute a GST C-terminal domain.

The protein belongs to the GST superfamily.

In terms of biological role, lignin degradation enzyme. The protein is Protein LigF (ligF) of Sphingobium sp. (strain NBRC 103272 / SYK-6).